Consider the following 498-residue polypeptide: Guanosine-5'-triphosphate,3'-diphosphate pyrophosphatase (498 aa).

It belongs to the GppA/Ppx family. GppA subfamily.

It catalyses the reaction guanosine 3'-diphosphate 5'-triphosphate + H2O = guanosine 3',5'-bis(diphosphate) + phosphate + H(+). Its pathway is purine metabolism; ppGpp biosynthesis; ppGpp from GTP: step 2/2. Catalyzes the conversion of pppGpp to ppGpp. Guanosine pentaphosphate (pppGpp) is a cytoplasmic signaling molecule which together with ppGpp controls the 'stringent response', an adaptive process that allows bacteria to respond to amino acid starvation, resulting in the coordinated regulation of numerous cellular activities. The sequence is that of Guanosine-5'-triphosphate,3'-diphosphate pyrophosphatase from Serratia proteamaculans (strain 568).